The primary structure comprises 772 residues: General transcription and DNA repair factor IIH helicase subunit XPD (772 aa).

The Helicase ATP-binding domain occupies 7–283 (DLPILFPYPR…QSDSKKLQDE (277 aa)). 42–49 (MPSGTGKT) lines the ATP pocket. [4Fe-4S] cluster contacts are provided by Cys-115, Cys-133, Cys-154, and Cys-189. The DEAH box motif lies at 233–236 (DEAH).

The protein belongs to the helicase family. RAD3/XPD subfamily. Component of the 7-subunit TFIIH core complex composed of XPB/ptr8, XPD/rad15, ssl1, tfb1, tfb2, tfb4 and tfb5, which is active in NER. The core complex associates with the 3-subunit CTD-kinase module TFIIK composed of mcs2/cyclin H, mcs6/cdk7 and pmh1/tfb3 to form the 10-subunit holoenzyme (holo-TFIIH) active in transcription. The cofactor is [4Fe-4S] cluster.

The protein localises to the nucleus. It catalyses the reaction Couples ATP hydrolysis with the unwinding of duplex DNA at the replication fork by translocating in the 5'-3' direction. This creates two antiparallel DNA single strands (ssDNA). The leading ssDNA polymer is the template for DNA polymerase III holoenzyme which synthesizes a continuous strand.. The enzyme catalyses ATP + H2O = ADP + phosphate + H(+). Its function is as follows. ATP-dependent 5'-3' DNA helicase, component of the general transcription and DNA repair factor IIH (TFIIH) core complex, which is involved in general and transcription-coupled nucleotide excision repair (NER) of damaged DNA and, when complexed to TFIIK, in RNA transcription by RNA polymerase II. In NER, TFIIH acts by opening DNA around the lesion to allow the excision of the damaged oligonucleotide and its replacement by a new DNA fragment. The ATP-dependent helicase activity of XPD/rad15 is required for DNA opening. In transcription, TFIIH has an essential role in transcription initiation. When the pre-initiation complex (PIC) has been established, TFIIH is required for promoter opening and promoter escape. Phosphorylation of the C-terminal tail (CTD) of the largest subunit of RNA polymerase II by the kinase module TFIIK controls the initiation of transcription. XPD/rad15 acts by forming a bridge between TFIIK and the core-TFIIH complex. Involved in the maintenance of the fidelity of DNA replication. The sequence is that of General transcription and DNA repair factor IIH helicase subunit XPD from Schizosaccharomyces pombe (strain 972 / ATCC 24843) (Fission yeast).